Consider the following 175-residue polypeptide: Large ribosomal subunit protein uL16 (175 aa).

This sequence belongs to the universal ribosomal protein uL16 family.

This Caldivirga maquilingensis (strain ATCC 700844 / DSM 13496 / JCM 10307 / IC-167) protein is Large ribosomal subunit protein uL16.